The primary structure comprises 555 residues: Formate--tetrahydrofolate ligase (555 aa).

Thr65–Ser72 contacts ATP.

This sequence belongs to the formate--tetrahydrofolate ligase family.

The enzyme catalyses (6S)-5,6,7,8-tetrahydrofolate + formate + ATP = (6R)-10-formyltetrahydrofolate + ADP + phosphate. The protein operates within one-carbon metabolism; tetrahydrofolate interconversion. The sequence is that of Formate--tetrahydrofolate ligase from Staphylococcus carnosus (strain TM300).